Here is a 161-residue protein sequence, read N- to C-terminus: Arachidonate 5-lipoxygenase-activating protein (161 aa).

Over 1-8 (MDQETVGN) the chain is Lumenal. A helical transmembrane segment spans residues 9-30 (VVLLAIVTLISVVQNGFFAHKV). The Cytoplasmic segment spans residues 31 to 52 (EHESRTQNGRSFQRTGTLAFER). A helical membrane pass occupies residues 53–77 (VYTANQNCVDAYPTFLAVLWSAGLL). Residues 78–80 (CSQ) lie on the Lumenal side of the membrane. The helical transmembrane segment at 81-102 (VPAAFAGLMYLFVRQKYFVGYL) threads the bilayer. Residues 103–107 (GERTQ) lie on the Cytoplasmic side of the membrane. The stretch at 108 to 115 (STPGYIFG) is an intramembrane region. A helical membrane pass occupies residues 116-128 (KRIILFLFLMSVA). Residues 129 to 161 (GIFNYYLIFFFGSDFENYIKTISTTISPLLLIP) are Lumenal-facing.

It belongs to the MAPEG family. In terms of assembly, homotrimer. Interacts with LTC4S and ALOX5.

Its subcellular location is the nucleus membrane. The protein resides in the endoplasmic reticulum membrane. Functionally, required for leukotriene biosynthesis by ALOX5 (5-lipoxygenase). Anchors ALOX5 to the membrane. Binds arachidonic acid, and could play an essential role in the transfer of arachidonic acid to ALOX5. Binds to MK-886, a compound that blocks the biosynthesis of leukotrienes. In Homo sapiens (Human), this protein is Arachidonate 5-lipoxygenase-activating protein (ALOX5AP).